Reading from the N-terminus, the 64-residue chain is Orcokinin peptides (64 aa).

2 propeptides span residues 1–6 (MNIRPG) and 23–24 (NI).

This sequence belongs to the orcokinin family. In terms of tissue distribution, orcokinin-3 is expressed throughout the central nervous system (at protein level).

The protein resides in the secreted. Its function is as follows. Myotropic peptides. The polypeptide is Orcokinin peptides (Camponotus floridanus (Florida carpenter ant)).